The following is a 218-amino-acid chain: Glutathione S-transferase-like protein OpS6 (218 aa).

Residues 5–86 (QPIKLYAHKK…YLIEQYDKDG (82 aa)) form the GST N-terminal domain. Positions 92–218 (SLQDKSLARA…KIAATKAALA (127 aa)) constitute a GST C-terminal domain.

This sequence belongs to the GST superfamily.

It participates in secondary metabolite biosynthesis. In terms of biological role, glutathione S-transferase-like protein; part of the gene cluster that mediates the biosynthesis of the bibenzoquinone oosporein, a metabolite required for fungal virulence that acts by evading host immunity to facilitate fungal multiplication in insects. The non-reducing polyketide synthase OpS1 produces orsellinic acid by condensing acetyl-CoA with 3 malonyl-CoA units. Orsellinic acid is then hydroxylated to benzenetriol by the hydroxylase OpS4. The intermediate is oxidized either nonenzymatically to 5,5'-dideoxy-oosporein or enzymatically to benzenetetrol by the oxidoreductase OpS7. The latter is further dimerized to oosporein by the catalase OpS5. OpS6 probably functions en route for protecting cells against oxidative stress by scavenging any leaked free radical form of benzenetetrol by activating the thiol group of glutathione. The polypeptide is Glutathione S-transferase-like protein OpS6 (Beauveria bassiana (strain ARSEF 2860) (White muscardine disease fungus)).